Reading from the N-terminus, the 242-residue chain is Pyridoxine 5'-phosphate synthase (242 aa).

Asn-7 is a 3-amino-2-oxopropyl phosphate binding site. Position 9–10 (9–10 (DH)) interacts with 1-deoxy-D-xylulose 5-phosphate. Arg-18 lines the 3-amino-2-oxopropyl phosphate pocket. His-43 serves as the catalytic Proton acceptor. 2 residues coordinate 1-deoxy-D-xylulose 5-phosphate: Arg-45 and His-50. Glu-70 functions as the Proton acceptor in the catalytic mechanism. Thr-100 contacts 1-deoxy-D-xylulose 5-phosphate. The active-site Proton donor is His-191. 3-amino-2-oxopropyl phosphate-binding positions include Gly-192 and 213–214 (GH).

It belongs to the PNP synthase family. In terms of assembly, homooctamer; tetramer of dimers.

Its subcellular location is the cytoplasm. It carries out the reaction 3-amino-2-oxopropyl phosphate + 1-deoxy-D-xylulose 5-phosphate = pyridoxine 5'-phosphate + phosphate + 2 H2O + H(+). It participates in cofactor biosynthesis; pyridoxine 5'-phosphate biosynthesis; pyridoxine 5'-phosphate from D-erythrose 4-phosphate: step 5/5. In terms of biological role, catalyzes the complicated ring closure reaction between the two acyclic compounds 1-deoxy-D-xylulose-5-phosphate (DXP) and 3-amino-2-oxopropyl phosphate (1-amino-acetone-3-phosphate or AAP) to form pyridoxine 5'-phosphate (PNP) and inorganic phosphate. This Chromobacterium violaceum (strain ATCC 12472 / DSM 30191 / JCM 1249 / CCUG 213 / NBRC 12614 / NCIMB 9131 / NCTC 9757 / MK) protein is Pyridoxine 5'-phosphate synthase.